A 479-amino-acid chain; its full sequence is Serine protease HTRA1A (479 aa).

A signal peptide spans 1–18 (MILVTLFCICALVTSLQA). The IGFBP N-terminal domain maps to 27 to 111 (VIGGCPSHCD…RGKQGVCVCK (85 aa)). Disulfide bonds link C31-C56, C35-C58, C40-C59, C47-C62, C70-C87, and C81-C108. The 60-residue stretch at 96 to 155 (SATVRRRGKQGVCVCKSSDPVCGSDGVSYRDICELKRVSNRAQSLQQPPVLFIQRGACGT) folds into the Kazal-like domain. The segment at 203 to 363 (GSGFVVSDDG…IPSDKIRQFL (161 aa)) is serine protease. Catalysis depends on charge relay system residues H219, D249, and S327. Residues 364–466 (AESYDRLARG…LRVVVRRGNE (103 aa)) form the PDZ domain.

It belongs to the peptidase S1C family. In terms of assembly, forms homotrimers. In the presence of substrate, may form higher-order multimers in a PDZ-independent manner.

The protein localises to the secreted. Its subcellular location is the cytoplasm. It localises to the cytosol. Functionally, serine protease with a variety of targets, including extracellular matrix proteins and proteoglycans. Through cleavage of proteoglycans, may release soluble FGF-glycosaminoglycan complexes that promote the range and intensity of FGF signals in the extracellular space. Regulates the availability of insulin-like growth factors (IGFs) by cleaving IGF-binding proteins. Inhibits signaling mediated by TGF-beta family members. Consequently, may regulate many physiological processes. Intracellularly, degrades TSC2, leading to the activation of TSC2 downstream targets. This is Serine protease HTRA1A (htra1a) from Danio rerio (Zebrafish).